Reading from the N-terminus, the 548-residue chain is Membrane protein insertase YidC (548 aa).

A helical transmembrane segment spans residues 6 to 26 (NLLVIALLFVSFMIWQAWEQD). Positions 28-56 (NPQPQTQQTTQTTTTAAGSAADQGVPASG) are disordered. The span at 29–42 (PQPQTQQTTQTTTT) shows a compositional bias: low complexity. 4 helical membrane-spanning segments follow: residues 350–370 (FVGN…GIMY), 424–444 (FPLI…MGSI), 458–478 (LSAQ…MFFI), and 499–519 (PVIF…YYIV).

The protein belongs to the OXA1/ALB3/YidC family. Type 1 subfamily. As to quaternary structure, interacts with the Sec translocase complex via SecD. Specifically interacts with transmembrane segments of nascent integral membrane proteins during membrane integration.

It localises to the cell inner membrane. In terms of biological role, required for the insertion and/or proper folding and/or complex formation of integral membrane proteins into the membrane. Involved in integration of membrane proteins that insert both dependently and independently of the Sec translocase complex, as well as at least some lipoproteins. Aids folding of multispanning membrane proteins. This Salmonella dublin (strain CT_02021853) protein is Membrane protein insertase YidC.